Here is a 605-residue protein sequence, read N- to C-terminus: Phosphoenolpyruvate carboxykinase [GTP] (605 aa).

Residues Arg79 and Tyr218–Gly220 each bind substrate. 2 residues coordinate Mn(2+): Lys227 and His247. Ser269 is a binding site for substrate. Ala270–Asn275 is a binding site for GTP. Cys271 is an active-site residue. Asp294 is a binding site for Mn(2+). The span at Leu364–Ala381 shows a compositional bias: basic and acidic residues. A disordered region spans residues Leu364–Ser385. Position 384–386 (Asn384–Arg386) interacts with substrate. GTP is bound by residues Arg386, Arg417, and Phe513 to Asn516.

This sequence belongs to the phosphoenolpyruvate carboxykinase [GTP] family. As to quaternary structure, monomer. Mn(2+) is required as a cofactor.

The protein resides in the cytoplasm. It catalyses the reaction oxaloacetate + GTP = phosphoenolpyruvate + GDP + CO2. It participates in carbohydrate biosynthesis; gluconeogenesis. Functionally, catalyzes the conversion of oxaloacetate (OAA) to phosphoenolpyruvate (PEP), the rate-limiting step in the metabolic pathway that produces glucose from lactate and other precursors derived from the citric acid cycle. This Saccharopolyspora erythraea (strain ATCC 11635 / DSM 40517 / JCM 4748 / NBRC 13426 / NCIMB 8594 / NRRL 2338) protein is Phosphoenolpyruvate carboxykinase [GTP].